The sequence spans 310 residues: Porphobilinogen deaminase (310 aa).

S-(dipyrrolylmethanemethyl)cysteine is present on Cys243.

Belongs to the HMBS family. Monomer. The cofactor is dipyrromethane.

The enzyme catalyses 4 porphobilinogen + H2O = hydroxymethylbilane + 4 NH4(+). The protein operates within porphyrin-containing compound metabolism; protoporphyrin-IX biosynthesis; coproporphyrinogen-III from 5-aminolevulinate: step 2/4. Its function is as follows. Tetrapolymerization of the monopyrrole PBG into the hydroxymethylbilane pre-uroporphyrinogen in several discrete steps. The protein is Porphobilinogen deaminase of Mannheimia succiniciproducens (strain KCTC 0769BP / MBEL55E).